Consider the following 249-residue polypeptide: Anamorsin homolog (249 aa).

The tract at residues Met-1–Phe-130 is N-terminal SAM-like domain. Positions Ala-131–Lys-161 are linker. Positions 172, 181, 184, and 186 each coordinate [2Fe-2S] cluster. The segment at Cys-172–Cys-186 is fe-S binding site A. 4 residues coordinate [4Fe-4S] cluster: Cys-210, Cys-213, Cys-221, and Cys-224. Short sequence motifs (cx2C motif) lie at residues Cys-210–Cys-213 and Cys-221–Cys-224. Residues Cys-210–Cys-224 form a fe-S binding site B region.

The protein belongs to the anamorsin family. Monomer. [2Fe-2S] cluster serves as cofactor. The cofactor is [4Fe-4S] cluster.

It localises to the cytoplasm. It is found in the mitochondrion intermembrane space. Component of the cytosolic iron-sulfur (Fe-S) protein assembly (CIA) machinery. Required for the maturation of extramitochondrial Fe-S proteins. Part of an electron transfer chain functioning in an early step of cytosolic Fe-S biogenesis, facilitating the de novo assembly of a [4Fe-4S] cluster on the cytosolic Fe-S scaffold complex. Electrons are transferred from NADPH via a FAD- and FMN-containing diflavin oxidoreductase. Together with the diflavin oxidoreductase, also required for the assembly of the diferric tyrosyl radical cofactor of ribonucleotide reductase (RNR), probably by providing electrons for reduction during radical cofactor maturation in the catalytic small subunit. This Drosophila grimshawi (Hawaiian fruit fly) protein is Anamorsin homolog.